The primary structure comprises 65 residues: Large ribosomal subunit protein bL33c (65 aa).

The protein belongs to the bacterial ribosomal protein bL33 family.

The protein resides in the plastid. It localises to the chloroplast. The protein is Large ribosomal subunit protein bL33c of Chaetosphaeridium globosum (Charophycean green alga).